The primary structure comprises 12345 residues: MADSGGPGSKHMDPTTIDAGGGGAGAAGGDDVPPVPAVRRRRAHEQKSSREQVLEEEKSQQLETSTVTRTYMKTITTSLTTSSSSNVEEFILGEHAAGAAAAPSPNQQRLRQKVAQYEKVWSDGSSPVKRPAEQSSDELRLTDDQDEYDAENPFEIDVHEIERRLRQERQRGLAEAEAAKLAFQQVQLRHTTPPRRVEVTSDQVASPFNVTLRTTSRMSPGAEHGNVEEHLAPFNVTLRTTRRTKKKEFKELENFLEGERTVREVPSADGVRTIITSSMTSDGGYAEEKIYRHGEGYVSPRDSPSWSRSSYSSERSSVTPPRSVDLTAGGRRILIKLEQESELTEENQTRDETDLSFGRQEVAMATGNIDITVGGSNPRRRLYQQTTVQVGGGNRTSPQDSTPQRPRDLDLAGTTKTMLTSTPIGTKEQPQTGPKTLVSPAATCQLRGSSTEEPRKIVSHKTITSTTTKSTSSSTSATSSSSTSRKLIETSPVVVGKIAQIRTGKSNASDNDIDIDNDSDTEGRPASSIVIVSTPTRPTTPATASVSASAVTPSASISATAAHALSGIGTFSKSLRQDYQTLATQSGRSNESPSDQEYQEFQSTMASINYARSNSQYDSHIKEKREEQERVQKKTFTNWINSYLLKRVPPLRIDDLINDLRDGTKLIALLEVLSGERLPVEKGRVLRRPHFLSNANTALQFLASKRIKLVNINPADLVDGRPPVVLGLIWTIILYFQIEENSRNLEYLGHGIGGSVSSLDSVGNQKHGDLKAEKWKQGARKTLLNWVTNALPKDSGVEVKDFGASWRDGVAFLALIDAIKANLVNLAELKKTSNRQRLETAFDVAESKLGIAKLLDAEDVDVPKPDEKSIMTYVAQFLHKYPEPKGASRDQSHVQQEADELRRFLVEKTTEYEPMVMMSSFPRDFGEYLLARSEVDAHLAAYNRLKQLIESQSGFLQVSRQSWEEINELWQRLQYQMMYWLWLLDSELPGDFGTVGKWLAEAEKLLMDNDIPNAMNEETAAVISRKLEEHKLFFADLPRILAMFDNAKRSPVAQQIPLEQLRNMERRLQEVGPKAAERRIRLKFLEHKCCLIAFLNLVENKMRGWTGKYGHEEKVAQQLEQYKNFVSRNKIFQEFQKAFVDMQQVVEEYKRDGNVPRKEINDIDRFMYETEERWKRVSMELKCCQNSLEEVVNCWRSWNQLAPTCEEWLQLAEQKVNQSEDERLDFFQDIPVWKDKFDALASSANYLIASCEEPIAQQLRQRHGALSERFERLFANTKQYMHAGDIIRSRQEYKSGIEQLSRWLRGAESVLDQRQVLGNSEQVKEYGQQLQQLASEIDDNEELFKTISRNFQSLIQDLSRDEVDKMMKLLKQEKESLVRIRAQLPAKLHLFHQLQIQQESLEAGQKEIHQWLSEAEQLLGTHNLSGGRDAINEQLHKHKTYFSRTVYYRSMLESKNKVFQNLLKAVSSDDKIDTAPASQQMQQLNERFNYVIQNAQQWEQRLDSAAGGWSNFKDNERVVSEWLTQAESMLVEKHIESKTTIETQKYFFEQVNDRWMNDLVQSAQQLLTTLPAQEQPAVVHSVEQLQSRWKNVLSQAPLHLLKLEFRLDENAFYQSLKDVEKELQLEQQALNRNEDVDSILQRNQQFLLQQDVVPRLERCLQNMQRLAQAHRQQQPGDISLDQAYDNAKSQWQLLSNKLGDMRQTLQQIPAQWQGYHLKFNDMVDWMNGVDQSLKNIVNEVNTMEEFEKEKVVFQKICQDADNKREDMKWLVKTLDSLLSYATEDEANLEQKKLEDLIARYKNLIPTIEITMVKTEVFSKCYTYRREVHEVVCLLSKVKDQTANIPAPDSLDRVNRLIEEQQYAINQLDHQRPHIMSMLQRGRDLIKDVHAPAFVNAEVKNLETGWNQAYTETSDKLQALKGTQAVWSEFVDQKNDIFSMLQTAETELRSLTPLQTDPKNVSQDLKSKRDLNVQLQQASHQLLPKLHALKSELAPLAAPDKRPILEKEVTEVEKMFFNTMEHVKDRVGYLEDYSAKWNNYKTRLAELQEWANKVAPKNIEALQSEDLTPEERVVKVQAFKRILGDRMKQLDLLAADASELAPKEGNIAEAKRLKGEITKLQEVLSAINRNVDHQAQAVQEDLVNWQQFQAGLQQIKPAVEQSEVKVNNVVSKPISLEEAVAMQQNAQQFETQCQEQLDKLHGISNISHKMLCKTNAPDELDAMHSRWTAVHENAKQASAKLEKLVANWKSFDADAAKLEDWVGQGEQQMSRRPAVLNTPHIDKLEKELVKLKSFNNEISQQQAKLVTLGQNADQISLHLAPEGAAALKDRVNQMKGKLQKLSEATRGHINEVSDAIISRQDFNAKLVNFSNWMEQLRNQVTQVEEINPERVETSLHVIHALLQEHADKKPSFNAIYDEVKQLALGATPEESNALNDAYTALVVNYQNLETNMLQKKAALEKWTELLGWKNDTESHLNYLKHQLDKPEGPAAEELSKVIDEIDNLGQGIGYWKGQAKEIDENPAIQLRDALSRRPLIATQIVNDVENKLENLKLRSQSQQQQIQQMTVRKDKFHALEHNFGQALQENRAKLDEILRQHPTLNNIDQIIADLVALNDALKYQADLKNRIHDEGSLLMREDIASMPAIQESLLIMDKNYDSLQNEIADRIQKYNLISQALREYADSKDKFSKELKKAEDLYNAIPQQPRDETELHQASEKTRKTMEQLRKSKLSLDELERRGNNVGKLFSAIGEPIPQEVPQEVTAAKQHWQDLHDKTAKNAHVYETEAVIWSQIEDAKKDLLPWLSETNQGLCDAADNSIEIEFGPMRLSKYRTELPSYQALKDSIVEKTNDLVKINKGAEIPALSALNKLLSEQFAEVNNNADRLSAITTSFNDQEQELRRRSKEAGERVSKLREQLIKCDDMSGDNNKIMERLQQCRALRGELDNSGNEIDNIKQKVDELRNLYPTFSESIIPKELNNVQKRYENVDLYAKKIESSLLQFLKKFHADKVGMLKRIIATQREKVAWCQPESSSDKYNLDVKKSSLQEVSKSIDDCKARHAETLKSLEMLKAVESPQNLAELTSDAELLRKDMQALQDSFDQIKGILDENVDLWSQYEQSNEQISNWLRDVEGRVKAETSSQVNLSEVPQKLQELSILQQDVLAHEPIINNLEQTSQQLIEKNPEARIGQFVTHLVQRYQAVSKALTSYIDKIRGAQLSNANFAKAAKDFNEWFGDAKIEFQELARMGSPGSSSATAQQLQTVKNYIKTFDNGQILLNNAVDIGEALYPVVSPDNRERIRADLRQMREKFDYLRDEANAFMQQVEGVLIQKTSIEESYTQVSHYLNESKAKVPTTDELYPTLATKKAALQNYKTQLQEITLHKNALKQLHDKAVTLCDDESERKTDESIQEYNTLSKKISDRITTVGNHVVKHEAYDQVLEKAQDWLNTIKSEAIDILNETTFEKEGAEEKLLVVENLLQHKPEGDSIFDTCHKLLETVLTQTHPSGHPALLKGFEEPKQSWEDFMTLCQDSLVKLKQLCSKWDEFDTIIEELDNWMKNVEAVVKNQNLKSTAEAKNAHLKQLQDISKDIERRGAAINELMDQGREIEGETDLNLKLSRLNTRYQTLKNLCKESIAKYVNYVKDHESFDKDFDSFKQNLQSSVDELAKTNEIVGDQSVLQDQQNKLREMSDKRILDSTLFEGLIDRGEKLYGHTSPEGREIIRQQLRALRTLWDNYTDDLNSATQKIDQCLLQFNEFSIAQDQLTKWLKDVDKAMQSHTEPKTTLQEKRAQLQNHKLLHQEITTHNVLVDNVCDKAQILVDQIKDNSLNVYLTSIKQLFQSIVQKSDEILHNLDDCVQKHNELNNALSSAKTWISNEKAKLLECDDAYGEKADIKRKIETLGQLAQNKPQAMKIISDIRDLFEKVKATTSEKGNEVLDKEIEELETTMKSHFDDIEGIEGKQKDVLAQWDKFEKALEELTKWCRSAEAVFREQQLQSTLHEKVEQLEKYKIQRELILQKEKEIDAFGDAAHALLNNCGADRLKTLTTQITNRYQLLQVLSKEVVNRWSNLVDDHQFYQDKYNEVDLWLQPIESQMAKVLLDEPTQSSNILQVLLSEKEQAESLFAALNAAGEKALPETSTQGREKIRKDLRDIRDRWDKLDEGIRNLEKRQEAQGVQLSSYQDILNQTVNWLDQVEKLIHNENPASWTSAQEIRSKLYKYKATNQDINSHKRIVEAVNEKAAALLGSAAPANADEISKAVAEVNKRYDQVGQDCAKLVADLDGAFDVYQQFSELQKAQQDYQKNLWDRLTGYSDYSGNKAALQARLQKINEIQDALPEGVAKLKSLEDHIEQQASNIPARSKEVMARDLANLHADFEKFGASLSDVKSGLENRLQQWNDYEINLDRLITWLGEAENSLKNYNLKSSFEEKEEQLNGFQSLAQNLRQNEADFDKVKDDTSELVQSSGETRIAVNVQQVSSRFQSIQATAKEILKKCEQAVQDHGHFNDKYKQCADWLANAQARYDDCCDLSTVASRDDLLKKQVVIQELLAQQPTATQLLNSTVELGEKCYGSTATEGREAIRSQLDDLTFDQLFDNIAITARKIQDKIAKWSGFDEIADSLKSWLDETENALPADIELKTTLDEKRNKLQTYRDILNDINNHQVELGNLQEIAANLPEKTELVDQIIKDISDRFGKLQKRAQNYVERYEGIVSAHQQYSKAVMDAQEFIDATLNTVHYWGDLDLEQISLHTNLDRLKNLKASLADEFPRVDQVRALGEKVIPGTVDVGQVNIKSQIDTTQQEWESLLTTISSTIEAIEARLQHWSEYEQLRDQCLAWIRDTDNNLHAIDLKEDLPKKRAQLDALKALQGDVRAKELEVDNVTEKAQTLLKGPSSNRASGPELVTKYQQIFHKVKELNNRWQQYVTSHEDFDNAISDCSSWINEIKEKLDYCSDMSSMSPKELDKKLATIQDVILLKDEGSARVLKILEQAQHVLANTAPGGHEAINKELTDLQDLWSGIALRIMDVKSNLDDSITQWSGFLDQVQNVRKFNEWLDGQVKELSEHQTTMTEKRAQLDRVKSTEEKVRVEKIDVDALKIQAKEMIASGQQSQAAFQAQKVLDTFDELFAKTQKLLSHRQDQYRDHRLFKEAYDDLVSWIGRAREKFPSLKQSSLSDKLAIENAVQATEALLNKQAQGELLVEHLVHTGEVVLASTSAQGQEIIRNDIRALRDSFEGLFREINQQKENLEVTMVQWRAYKEEYERLMEWLQQIDILVKNHKLNLCPNLPEKEKQVADMKEVMSRLEKGKDDIDKFNASAASLLKSHLDTYVNNQLRHLSSVYQVQVNLAKDVLKKVETNRDQHREYDANMKSAKDWIANAKATIQSAGEGAGSKEALQRRLEQIQDLIRNRELGQNLVHTAINNGEKIIRNTRSDGRDAINTEMKELQTEWDRLVKKMSTAKVQLETNLLQWADYSSSYSQLQQWITDREAKLQQACEQKIVKSKRGQPGLSSGLSERKANLRQTNNIVQDIVSFEPMIQSVTSKASVLQQGAPGTEISDKYENLTKQAKDLYEKQKNTIESYQSLIDAGNEFATWLRNAKERLSKCSEPTGDKQALAEKTHQLKILQGELPEGAQKLKNALEQGEIACRSAEPEDCEIIEQEVALLQEEFDAYREALNKAKDYLEVGIVKWSDYQDQYTEALEWLSKTEALVQSYNKLQDSLIQKKVVLEQFQGHLQTLFDWQKTLDDLNMKAQVLLETCSDTRISNAIMQLTTKYNALLTLAKEVMRRLEMHYQEHQQHHSLYEECQSWIEKTREKLSECEQIPGTLNEVQIKLNTVKNLRQGFETGQNKLRYLLELKEKVIMNTEQNGAAKIQEDTEALKQDFDKLLVDLNDVRQKLANRLAQLEEIFKLYKILIEWLEDVEPSVKTSDEFLNDLSEKRAALEKFRVIQRDINGHNDIVEKINQRLKEDNSLDLKDFQPGLTKFDDLQTQVNKIIESLENQVNSHEKYKQAYNELQDWLRRTRIEVEQCADCHGEKDQVESRLNRLGDIQSSSLEGKALLEACEELSQAVIATSGSEGQDNVAQEIKHLTSEWETLQTISRDARSSLESCLAAWQTFLQKFNKINLWIETMNKRVTKSQEGENKTPEDLVNAKKLLEEVLAEKDNVEDLNDNCELLMEQSACTRIRDQTIETQANYTKLLTSAQGLVAKIEKNLSDHTEFLNYKKEMDAWIEKAQQVLDDCSTDGDAAIIAQKLDTVNSLASRLPEGQHLLALVQDAYSKASNITPEDKQEKLRELMTKVREDWDALGLAVKQKLSDLKQAQNRWNDFAANKDKLEKWLNETETTLKVAPETKGELSEMKTLLERYKTLSNELKLKGNELEQLQSEARDLGTEVDAVNRLQSRCDKLKNDCSAHITALEQEMFDYNAYHQSLQDVEKWLLQISFQLMAHNSLFISNREQTQEQIKQHEALLVEIQKYQTNLDDLNAKGQAQIKRYESSTPAIRPTVESQLKNIQDSYNSLLQTSVQIKNRLLESLAKFQEYEDTLDSIMRNLETYEPIIQTELDAPATSLELAQNQLRCAQEMQNKLNNEKSRLAAAVQACEAATASISRPSSPLETAMQAIPERELIVRAKLEDLLDQKPPPKTRSSTGGVSTDDDKDEADVEIQVELSDVNEALLDPIAHERVKNYRRIVRLNSAHVGKLNELVAKVQSHLGGLTASVSELEQQQKQRAELQDWVKKQQSSVSDWMMRPCKLRPEAAQQELVSMNDLLNSIGDKRSQLMLEMTGSLGDEDTDLDDNIDKLESELMDAIAKKQAGQNVIDGYRQGMADVQNWFDTLIKRMDVLDRGSGLNCAQKMAAINEIKNEYELQGHPKIQELKGKAAQVAEVISNLDGQQVEEQMKSLDRRFADLGKRIDRKSQLLDVTNKGVEGAKGEIDQLQNWVKQQIEELQAPKPLGYTPKDAEARQQKIKSLMKDAEAKQSLADVLEKRVANMQQELEPVEYSQLESALRNLNTENRNLSGVLKAELDRALEASKARKSLENDLDKARQWLKTKISEVRKLPVYHPLTSAEIEKKIQENRKYDDDAKQFNDSVLTDVQRQAANIMKDCDDADKAALQQILDEIAADYQTLKDESSKRGKSLDDLLQGRKAFEDSMKNMGDWLNEMETATEGELRTTSLPVLEEQLAHYKKLLSDAENKGGLINDVSEQGKSILPTLSNADKLKLNDDIKNMKDRYGRIKNTIDDRVNALGDHIKKYKDAKSRLAECSQFLGNIQQKLRELNRPIGSRIEDVQDLLGAYEGILKELKDSKSKMGDMQMDDLPELQSILAQQDDMIKLIEDQLAHLRQLLLLREQFIALINEIIAFIMKYTDVIIDIENSPDSLEDKINKYDDVIVKIQECEGVLASANDKGQKIASEGNAADKNSITEQLQSLKNQLQNLRKAVESQRQKHQLQLESHKKMAAELSEILDWLHSHEGAAKSRPLLDRDPESVERELQKHQSLSQDIESYLNKFNKINDGVKTEIGMPSSLLEMLSEGRSLVASLPHELEEREKYLKNNRDSRLEYMQLVAKFNDWVHEAELRLQNSQHGIDYEHLVQDLDEHKIFFGNEAPIRNLVHKQIQEAADKIWSSLNNYEQSELSAELAQFQTKLTNTLANAKTQQSELEKEAERWREYQQSIDRVKATIERTKFVDEPVQNLAGLHFNIQKLSHAIGNVQSQNSDLTLVNQQAQSLIRQADARNRQLIEQDNAGLNRSWQDLVRSLEQRRDNLQQLAEHWDGFENSLHAWEKALGRLEDKFRNVDPTVRSRRHLEDTKNAIQELREESNQLKSSHKEIEALSKSILTFLGEVHKPSAEAIQAKVDKLVEQQAKLNDTLRDKEQQVSKDLEEIEQVFRRISQLQDKLNALHEQLQSVHVYDEHIAQTEQLLITLNSQVQQAAEESKLLVAQTTAHYQAKQNQLPSDIAQEFTALELLAERVQVTMETKEKDFKRAKTVRTEYVDGVDEVQRWLLQAEVQVQERSLTPTQMKELLQRINHEITAIYERFTLVKTNGQLIIENCRNSEEKTLVQTTIDQLAASLAQVRGWLDEKKQAVGDSLDAWTRFMNLYQIVMSWASEKRNFIDQTIELRTLPEARNKLNDYVTSVKSIKPIVKHLSEMDKELEHIGQVTTVGDLKDKLQEAEDAKISVEAVLLERNSLLQEACEEWDQCERKIKDIRSWHEKTKQGLDSSQQQKKPLRDQLGFCEKTLADINVQKTKLRLSIEKLEVHFRNGMGGDPRLSENVDDLVRVLDGLGELVKAKSQSLEQTLAQIDVYQQQMQSLRQRIIQEEQQLRLVMAPTYLPHDRERALAEQQDLITQELDELLQSLSSVEDGIANMNQSSLDGMLHGLKLIQSNLEVHERDAIELKNQAKKLPTDPATERLLNDTVDRIDLLLRRTQQGITMIANAMHGQKKRQQEIDEYQQHLLELEQWIIEVSAELASFEPTSDSSTDEQVLKSQVERSQQLLRTLKDRQQSMEDLVEQTRQLQSHPDVSPLADTLMEQLQSIITILREQVTVATKRIFTIEKRIVDLRKAKSEEAQRQRVLADSLIKPPTEAPASPEAHESIESNENTIDSSSMPEEEIKPTGVYVETQTSLSLQQPPVQVVTTTTVEAQTSFKEPAVETAEVALQTQKERSPTENIMVTQTVHHGQETIQIDTTRNKDVPDEPEDVQIEARYHQRPKGDVDRATELILKNVPQAFETTFVEPDETTTEVIVGPDGTKHIVLKKVTRTRQQVVQQQQISSIETISDSDGNIEVHSTGQINLENVHTTDTKADPEEGSVHTVITQQTRGAVVDSTQPEGVILQEFETEPTIETYEEVIAPGSQAQLIPMQPGDVQTQGTIRAVVQQVTRKVIRKTRKIIKRVVIIDGKEHITEEVVEEPEEVEITEEETAPHINVNIVRTVDGKVVSEEEFQRMMQEPGVLIEEVATDLQKPTAEPQQEVFDIESTQVTTTTRTTTATTQEQEQPEQQTQPTTTETTKEAPVELPAPQVDVEQPVVVATTSPVHVPTADVVEPKDSSPTSTTAAVVDVEAVVEDINEIWPLEHHLKPTNIDFSQHVEELAAPAAVTAETEASMPVEEIWPTSPETGNSLTLEQYEFEPQSPHEESTKSDLVKPQETEPQVVAETKPEGITTGSITITKTTTTITSSTEVPEETLVQNVPADEQQPPANKIKTDIQSFLEAEQTLAAALKEQSSTPTGASVAEDVQTQPEEIVLEERTVEISTIKTEENQQEPVIVEEVKSLPVEPEPVEPELEEVAIAIVEQTEEKPEEPVIEKQPASGPIDLRAATQLFISGEAAASTAPQKTFQISAPSLEDNGAGVLKVVLGKESTNEEDTAAPTTGKVSMTIIETAAAPAADAKRRRKKKKRRDTKHEEELEQEQETEPEPVAAVKEPEVSSDVPVSPEDSPRDTVRHESIVEISPDSDLSSIEIDTKVKIVEDAVVSSPSESPRTPMVELVIPTEVVELALVEDEEQQTTPRIPSPTEKSEVEQDIKSVQTSPQHQPKLDETAVQTSLEVQPDNQENESQTLIVEITETEAQTTPRSEEQSVAVEISTTEIQTDVSGQPAETVEISSQTTVTTTIEKELQTTPKDSPRAPEAGSSDVVESLVQDLVKDMTTDLPVRTSEQSTVTETTTTTETHVQTTTPEPREQTEVIKPETAHEETSTVELVQFADGEMQTTPPGDQQPASLDDSSLTATSISVSEPYELEVKTTVAIPADSDTSVAEPTVYEYTQTMQLPKQEKKSKKDKKKKQKNVPEVEQQLPEDQQISVTVEIAPELLSESGIVVSTNQQIEDVPHVTPVVDTPIESEEVETPKAQRVQLQITKTTVYDEYPDLPVHITEQNKVLIASQQSKRSGAGPTSSAVTIEEVGSPTEELVVPITPGPDNLSGEPHNIWFSATTSVDKTPIELSQALIMSESLQHYPGQQKLTQEPILISTKEAIGDRIKQLKQASPQQATPLSNVLHLATLSEQIKELPTEQRILEVNEGLKDLDVAIKNGDKTVIQTTVITVIEKVSTWLETIEYRVYLIRQNSNEGPSEEKLDNYNQLNDELSTIKQNVVQLERQLSKAEPEPQLLQCVDSLKEHVDAVEQVTQQNQVQDSNDLDKWHNFEVLLYNVSSVLADLQQSYDLLINQEYPLSAKLAQLDELEQQHEAAQQQLAHLCQNARAFQRDFPGKKMPQDVHNAFETSKNIANNIQAERERVLQLQSLAEEYEQTLKEFTKITVLADKLVESPIVSSSLEQLNNEVQKQRKFFVNLSHCRAMLESLEENIDSETREKHSELHKELYNRATSLLDKASERSSKLVQAASRWTVLEKGMRDELQWLQVAQQRVPDLSAVTSADYDQYTTLYQSLSNDISHHYVKMTQLSGIANKLQLLVQAPNLVEETNEALIVLLKLREEVALYLHRLLVFKEIWVQYEQQTDKLEAFVREAEQELRNIQIPSQPTHQPIEHMRQFWEIKARFELHNNVRTDTGLSFEKSLQVIPLADEMLQRQFHAQLEDRWQAVAQAIELIQHNIVECLSSEDVPADEKLKMVERELQEIYLTMTSMKGVIKNEEELCLYIERVQVLRTRVGFIGNELGRIGLQEPAIEPEKVGELFSLSHKISTQIAEELEGASVLRDQLQAIQEGISNQRKHQAKISVILDECEAAERQGADVLEKAVADCQAAGEELVISWQEIMRIRQMLHTLPMRLKMSVSPVKLERDISQLQDDHAFLESKCTNIMAILRSRLAVWLRYERQLELVHGSVQETDFMMELIRVHGQVDYERLRKATERLEGLAGDLHNREQLIDELKGAAKPLIESCDVQIVEQIESAVQEAVVAWNDTSENLQQLRTRYQRAVELWDKYRNASAAVKNSIDQQMDAVKSLEQPLDALQHAKVCQDNLTTQNDRILELRDIVAKIAADVGLDASALMQGELDALGQRLAECKDAITTLANVAETQDKERKELDKEVTLAKAYFNNVQQDISREAPQNPKESEEQLAALRAHLQTLARTEEQLRQLKERHQNSEVAPSVASSDDDGILEVLALWQKIFQDTFQEYHRLSTRLARSQNSSEALRLWRQYLQHVQSFLSCAIPEDYSSLREQQQLCAIHQNLLISQQSVLSETPLESELSEQYKALTNLHNETLSRIMQRNGELERRVSGWNAYRQQLAALLDWLRQREAERNALQLRYIHLKRVPHLKHRLDAMIQQLDQGEQQSKALQEQQQELARHCDDALATAMRMEQASIGQRISNLRAALKTWQGFLQRVTQLSESYEQRVNQLQQEFGAAQKLLDANSESLPTQPAAIEQLLGSLRAQRVQLGAQVSALESLTVTQEELKECISPHDMKTIRQRNWLLWQQHADLDYQLANLINSIEERLSLLSNYQIRYDRISQWLQRLEQRVEKDADVTAMTNPEQAAKQLEQQVNSELQLRDKEREWLLSTSRELLTLYSEPEVRSQVQQQSDSLIDRWQRLKYLAKQKATKIGELKMTLLRLEERIALIRAWLFEVESQLDKPLNFESYTPNVIEAKLKEHEQIQRSIEHHSSNVGEVLNLVEMLLNDADSWRTQVNTSGLAASAQNLEQRWKNVCSQSAERKARILTIWNLLQQLIKLTAEHKNWLGKQESQIAGFERDQKSHSKHKLEERQMELRAKLEELESQSVNLRQLEQIYAKLAMSAGVEPENIQKLTLPTKVMVSMWRQLTPRCHALLDAIDKDAKLMREFNNAQLEATNSLNAIQKALEQLPSAENQQTSKAEPKAVLQRLESLEKKLQDAQQHVQQADNLAQEAKTRTKQQPQLKQLLELVSAYTTLWQTVQTRIVTLKTTWLTRAAQAAASLPVSEAANAAVQVNTLSQRKLRQAQQMQRETSITAKDAYIMELQTAITECQNNLDELQRTVVDKTRKPGPQKIAKLLGNAQSSTELVKHLSHLLLTECKADDQAAEVDTVAELTLRFDTLQSQWKARQQHDQNASEVGRLTCPLCTQRNWQQIDNDLWRLEQWLQFAESTQKAQSAPPSNIELLEDVTQDHREFLLDLESHKSIISSLNVVGDHLATHTLDTEKARQLRSRLEADNERWNNVCINATKWQGLLQTALMGNSEFHQTIGELVEWLQRTEQNIKASEPVDLTEERSVLETKFKKFKDLRAELERCEPRVVSLQDAADQLLRSVEGSEQQSQHTYERTLSRLTDLRLRLQSLRRLSGIYIVKLGAVLGYEGDNLGVPLHMLSSELLDNTTLSTSSMQAAAPNTENANNTDGGDAVDGDVINTTVLARGARFLGRVARASLPIQALMLLLLGVATLVPHGEDYTCMFSNTFARSLEPMLSYPHGPPPT.

Disordered regions lie at residues 1 to 68 and 121 to 152; these read MADS…STVT and WSDGSSPVKRPAEQSSDELRLTDDQDEYDAEN. Residues 1–12295 lie on the Cytoplasmic side of the membrane; that stretch reads MADSGGPGSK…GARFLGRVAR (12295 aa). A compositionally biased stretch (gly residues) spans 19–28; sequence AGGGGAGAAG. The segment covering 45-60 has biased composition (basic and acidic residues); sequence EQKSSREQVLEEEKSQ. The stretch at 249-273 is one LRR 1 repeat; the sequence is FKELENFLEGERTVREVPSADGVRT. Disordered stretches follow at residues 295 to 325, 387 to 488, and 504 to 526; these read EGYVSPRDSPSWSRSSYSSERSSVTPPRSVD, TVQV…RKLI, and GKSNASDNDIDIDNDSDTEGRPA. Positions 299–321 are enriched in low complexity; it reads SPRDSPSWSRSSYSSERSSVTPP. 2 stretches are compositionally biased toward polar residues: residues 387-404 and 414-434; these read TVQVGGGNRTSPQDSTPQ and TTKTMLTSTPIGTKEQPQTGP. Over residues 462-484 the composition is skewed to low complexity; it reads TITSTTTKSTSSSTSATSSSSTS. Residues 511–520 are compositionally biased toward acidic residues; sequence NDIDIDNDSD. Calponin-homology (CH) domains are found at residues 630–737 and 777–882; these read RVQK…LYFQ and QGAR…HKYP. One copy of the LRR 2 repeat lies at 823–847; the sequence is LVNLAELKKTSNRQRLETAFDVAES. The stretch at 919–952 is one TPR 1 repeat; that stretch reads SSFPRDFGEYLLARSEVDAHLAAYNRLKQLIESQ. LRR repeat units lie at residues 1089-1112, 1389-1411, and 1616-1642; these read CCLIAFLNLVENKMRGWTGKYGHE, HLFHQLQIQQESLEAGQKEIHQW, and LKDVEKELQLEQQALNRNEDVDSILQR. The stretch at 1603–1636 is one TPR 2 repeat; sequence LEFRLDENAFYQSLKDVEKELQLEQQALNRNEDV. Residues 1903–1935 form an HAT 1 repeat; sequence TGWNQAYTETSDKLQALKGTQAVWSEFVDQKND. LRR repeat units lie at residues 2087 to 2109 and 2558 to 2581; these read KQLDLLAADASELAPKEGNIAEA and QQQIQQMTVRKDKFHALEHNFGQA. The region spanning 2109–2233 is the Calponin-homology (CH) 3 domain; sequence AKRLKGEITK…SRWTAVHENA (125 aa). The stretch at 2663-2696 is one TPR 3 repeat; that stretch reads ADRIQKYNLISQALREYADSKDKFSKELKKAEDL. Residues 2699-2724 form a disordered region; it reads AIPQQPRDETELHQASEKTRKTMEQL. Residues 2704 to 2724 show a composition bias toward basic and acidic residues; it reads PRDETELHQASEKTRKTMEQL. LRR repeat units follow at residues 2728-2751, 2935-2959, and 3030-3053; these read KLSLDELERRGNNVGKLFSAIGEP, CRALRGELDNSGNEIDNIKQKVDEL, and SSDKYNLDVKKSSLQEVSKSIDDC. Positions 2894 to 2962 form a coiled coil; it reads EQELRRRSKE…KQKVDELRNL (69 aa). One copy of the Spectrin 1 repeat lies at 3110–3207; the sequence is LWSQYEQSNE…AVSKALTSYI (98 aa). Residues 3346–3379 form a TPR 4 repeat; the sequence is KAKVPTTDELYPTLATKKAALQNYKTQLQEITLH. LRR repeat units lie at residues 3370–3393, 3437–3462, 3530–3556, and 3611–3634; these read KTQLQEITLHKNALKQLHDKAVTL, LEKAQDWLNTIKSEAIDILNETTFEK, LVKLKQLCSKWDEFDTIIEELDNWMKN, and NLKLSRLNTRYQTLKNLCKESIAK. The stretch at 3539–3633 is one Spectrin 2 repeat; it reads KWDEFDTIIE…LKNLCKESIA (95 aa). The stretch at 3629–3662 is one TPR 5 repeat; the sequence is KESIAKYVNYVKDHESFDKDFDSFKQNLQSSVDE. The stretch at 3706-3739 is one HAT 2 repeat; sequence KLYGHTSPEGREIIRQQLRALRTLWDNYTDDLNS. The stretch at 3748–3771 is one LRR 15 repeat; it reads LLQFNEFSIAQDQLTKWLKDVDKA. A Spectrin 3 repeat occupies 4177–4273; the sequence is SYQDILNQTV…YDQVGQDCAK (97 aa). One copy of the TPR 6 repeat lies at 4360 to 4393; sequence EVMARDLANLHADFEKFGASLSDVKSGLENRLQQ. Residues 4371-4403 form an HAT 3 repeat; that stretch reads ADFEKFGASLSDVKSGLENRLQQWNDYEINLDR. The stretch at 4611–4701 is one Spectrin 4 repeat; it reads FDEIADSLKS…GKLQKRAQNY (91 aa). LRR repeat units lie at residues 4654-4676 and 4742-4763; these read NDINNHQVELGNLQEIAANLPEK and EQISLHTNLDRLKNLKASLADE. Residues 4799–4830 form an HAT 4 repeat; sequence EWESLLTTISSTIEAIEARLQHWSEYEQLRDQ. The Spectrin 5 repeat unit spans residues 4820–4919; the sequence is HWSEYEQLRD…VKELNNRWQQ (100 aa). Residues 4839–4863 form an LRR 18 repeat; the sequence is DNNLHAIDLKEDLPKKRAQLDALKA. An HAT 5 repeat occupies 4894–4926; that stretch reads ASGPELVTKYQQIFHKVKELNNRWQQYVTSHED. LRR repeat units follow at residues 5266–5289 and 5333–5357; these read QIDILVKNHKLNLCPNLPEKEKQV and SSVYQVQVNLAKDVLKKVETNRDQH. One copy of the TPR 7 repeat lies at 5645-5678; the sequence is SAEPEDCEIIEQEVALLQEEFDAYREALNKAKDY. LRR repeat units lie at residues 5761–5784, 5820–5843, and 5979–6002; these read SNAIMQLTTKYNALLTLAKEVMRR, PGTLNEVQIKLNTVKNLRQGFETG, and TKFDDLQTQVNKIIESLENQVNSH. The Spectrin 6 repeat unit spans residues 5791–5895; the sequence is EHQQHHSLYE…DLNDVRQKLA (105 aa). One copy of the HAT 6 repeat lies at 6088–6120; that stretch reads SEWETLQTISRDARSSLESCLAAWQTFLQKFNK. 2 Spectrin repeats span residues 6321-6405 and 6424-6530; these read RWND…DKLK and AYHQ…RLLE. Coiled-coil stretches lie at residues 6356–6397 and 6454–6484; these read MKTL…VNRL and REQTQEQIKQHEALLVEIQKYQTNLDDLNAK. The stretch at 6363-6387 is one LRR 24 repeat; that stretch reads YKTLSNELKLKGNELEQLQSEARDL. Residues 6522-6555 form a TPR 8 repeat; it reads VQIKNRLLESLAKFQEYEDTLDSIMRNLETYEPI. LRR repeat units lie at residues 6531 to 6554 and 6560 to 6587; these read SLAKFQEYEDTLDSIMRNLETYEP and LDAPATSLELAQNQLRCAQEMQNKLNNE. A coiled-coil region spans residues 6567–6597; sequence LELAQNQLRCAQEMQNKLNNEKSRLAAAVQA. The interval 6631-6657 is disordered; that stretch reads EDLLDQKPPPKTRSSTGGVSTDDDKDE. The stretch at 6660–6695 is one TPR 9 repeat; the sequence is VEIQVELSDVNEALLDPIAHERVKNYRRIVRLNSAH. An LRR 27 repeat occupies 7004-7026; that stretch reads SALRNLNTENRNLSGVLKAELDR. One copy of the TPR 10 repeat lies at 7161–7195; it reads EMETATEGELRTTSLPVLEEQLAHYKKLLSDAENK. LRR repeat units follow at residues 7219–7242, 7300–7318, 7319–7339, and 7340–7361; these read LKLNDDIKNMKDRYGRIKNTIDDR, KELKDSKSKMGDMQMDDLP, ELQSILAQQDDMIKLIEDQLA, and HLRQLLLLREQFIALINEIIAF. The stretch at 7419-7457 forms a coiled coil; the sequence is KNSITEQLQSLKNQLQNLRKAVESQRQKHQLQLESHKKM. One copy of the LRR 32 repeat lies at 7524–7547; the sequence is SSLLEMLSEGRSLVASLPHELEER. Residues 7644-7676 form an HAT 7 repeat; it reads TKLTNTLANAKTQQSELEKEAERWREYQQSIDR. One copy of the TPR 11 repeat lies at 7654–7687; it reads KTQQSELEKEAERWREYQQSIDRVKATIERTKFV. 3 LRR repeats span residues 7692-7714, 7752-7777, and 7816-7840; these read QNLAGLHFNIQKLSHAIGNVQSQ, QDLVRSLEQRRDNLQQLAEHWDGFEN, and LREESNQLKSSHKEIEALSKSILTF. One copy of the TPR 12 repeat lies at 7759–7792; that stretch reads EQRRDNLQQLAEHWDGFENSLHAWEKALGRLEDK. Positions 7799 to 7935 form a coiled coil; sequence TVRSRRHLED…NSQVQQAAEE (137 aa). The TPR 13 repeat unit spans residues 7878-7911; that stretch reads SKDLEEIEQVFRRISQLQDKLNALHEQLQSVHVY. 4 LRR repeats span residues 8178–8201, 8238–8264, 8298–8321, and 8354–8377; these read KISVEAVLLERNSLLQEACEEWDQ, EKTLADINVQKTKLRLSIEKLEVHFRN, EQTLAQIDVYQQQMQSLRQRIIQE, and DELLQSLSSVEDGIANMNQSSLDG. One copy of the TPR 14 repeat lies at 8431-8464; it reads QQGITMIANAMHGQKKRQQEIDEYQQHLLELEQW. An LRR 40 repeat occupies 8534–8557; the sequence is EQLQSIITILREQVTVATKRIFTI. Disordered regions lie at residues 8583-8616, 8966-9023, 9131-9158, 9361-9459, 9502-9735, and 9769-9797; these read IKPPTEAPASPEAHESIESNENTIDSSSMPEEEI, QKPT…LPAP, EFEPQSPHEESTKSDLVKPQETEPQVVA, GKES…PDSD, LVED…TSIS, and TMQLPKQEKKSKKDKKKKQKNVPEVEQQL. Positions 8601-8611 are enriched in polar residues; sequence SNENTIDSSSM. Over residues 8982-9011 the composition is skewed to low complexity; that stretch reads TQVTTTTRTTTATTQEQEQPEQQTQPTTTE. Positions 9136-9151 are enriched in basic and acidic residues; it reads SPHEESTKSDLVKPQE. Over residues 9394–9404 the composition is skewed to basic residues; the sequence is KRRRKKKKRRD. The segment covering 9410-9419 has biased composition (acidic residues); the sequence is ELEQEQETEP. Low complexity predominate over residues 9420-9439; that stretch reads EPVAAVKEPEVSSDVPVSPE. Residues 9440-9451 are compositionally biased toward basic and acidic residues; sequence DSPRDTVRHESI. Polar residues-rich tracts occupy residues 9544-9563, 9587-9597, and 9605-9625; these read AVQTSLEVQPDNQENESQTL, ISTTEIQTDVS, and EISSQTTVTTTIEKELQTTPK. Over residues 9658 to 9680 the composition is skewed to low complexity; sequence TSEQSTVTETTTTTETHVQTTTP. Over residues 9681–9698 the composition is skewed to basic and acidic residues; the sequence is EPREQTEVIKPETAHEET. An LRR 41 repeat occupies 9699 to 9721; that stretch reads STVELVQFADGEMQTTPPGDQQP. Positions 9711 to 9735 are enriched in polar residues; it reads MQTTPPGDQQPASLDDSSLTATSIS. Basic residues predominate over residues 9777–9788; that stretch reads KKSKKDKKKKQK. LRR repeat units lie at residues 9995 to 10019, 10073 to 10096, 10252 to 10276, and 10353 to 10376; these read SNVLHLATLSEQIKELPTEQRILEV, EEKLDNYNQLNDELSTIKQNVVQL, KEFTKITVLADKLVESPIVSSSLEQ, and RDELQWLQVAQQRVPDLSAVTSAD. Coiled coils occupy residues 10072 to 10099 and 10172 to 10257; these read SEEKLDNYNQLNDELSTIKQNVVQLERQ and LSAK…FTKI. The TPR 15 repeat unit spans residues 10231 to 10264; the sequence is QAERERVLQLQSLAEEYEQTLKEFTKITVLADKL. Residues 10426–10458 form an HAT 8 repeat; sequence IVLLKLREEVALYLHRLLVFKEIWVQYEQQTDK. LRR repeat units follow at residues 10512-10535, 10570-10593, and 10644-10667; these read EKSLQVIPLADEMLQRQFHAQLED, ERELQEIYLTMTSMKGVIKNEEEL, and AEELEGASVLRDQLQAIQEGISNQ. Residues 10854-10888 form a TPR 16 repeat; that stretch reads VVAWNDTSENLQQLRTRYQRAVELWDKYRNASAAV. The stretch at 10855–10887 is one HAT 9 repeat; sequence VAWNDTSENLQQLRTRYQRAVELWDKYRNASAA. LRR repeat units lie at residues 10907-10929 and 11021-11043; these read DALQHAKVCQDNLTTQNDRILEL and AHLQTLARTEEQLRQLKERHQNS. Positions 11016–11046 form a coiled coil; it reads LAALRAHLQTLARTEEQLRQLKERHQNSEVA. The stretch at 11070-11104 is one HAT 10 repeat; that stretch reads DTFQEYHRLSTRLARSQNSSEALRLWRQYLQHVQS. One copy of the TPR 17 repeat lies at 11072–11105; that stretch reads FQEYHRLSTRLARSQNSSEALRLWRQYLQHVQSF. One copy of the LRR 51 repeat lies at 11197 to 11222; it reads EAERNALQLRYIHLKRVPHLKHRLDA. 2 coiled-coil regions span residues 11220–11247 and 11281–11308; these read LDAMIQQLDQGEQQSKALQEQQQELARH and LQRVTQLSESYEQRVNQLQQEFGAAQKL. LRR repeat units lie at residues 11342 to 11365, 11398 to 11422, 11670 to 11692, 11697 to 11720, and 11744 to 11766; these read SALESLTVTQEELKECISPHDMKT, LSNYQIRYDRISQWLQRLEQRVEKD, EELESQSVNLRQLEQIYAKLAMS, PENIQKLTLPTKVMVSMWRQLTPR, and EATNSLNAIQKALEQLPSAENQQ. A coiled-coil region spans residues 11655-11685; sequence KHKLEERQMELRAKLEELESQSVNLRQLEQI. Positions 11776-11806 form a coiled coil; the sequence is LQRLESLEKKLQDAQQHVQQADNLAQEAKTR. Residues 11804-11836 form an HAT 11 repeat; sequence KTRTKQQPQLKQLLELVSAYTTLWQTVQTRIVT. LRR repeat units follow at residues 11959–11981 and 12198–12220; these read DTVAELTLRFDTLQSQWKARQQH and SRLTDLRLRLQSLRRLSGIYIVK. Residues 12253 to 12272 are disordered; it reads SMQAAAPNTENANNTDGGDA. The span at 12256–12267 shows a compositional bias: low complexity; sequence AAAPNTENANNT. The region spanning 12287–12345 is the KASH domain; sequence ARFLGRVARASLPIQALMLLLLGVATLVPHGEDYTCMFSNTFARSLEPMLSYPHGPPPT. A helical; Anchor for type IV membrane protein transmembrane segment spans residues 12296–12316; it reads ASLPIQALMLLLLGVATLVPH. One copy of the LRR 59 repeat lies at 12301–12323; sequence QALMLLLLGVATLVPHGEDYTCM. At 12317–12345 the chain is on the perinuclear space side; the sequence is GEDYTCMFSNTFARSLEPMLSYPHGPPPT.

Belongs to the nesprin family. In terms of assembly, core component of LINC complexes which are composed of inner nuclear membrane SUN domain-containing proteins coupled to outer nuclear membrane KASH domain-containing nesprins. Interacts with klar; this interaction allows the anchoring of the Msp300 nuclear ring structure to the nuclear envelope. Interacts with sls; this interaction mediates the recruitment of Msp300 to the Z-disks.

It is found in the nucleus membrane. The protein resides in the cytoplasm. Its subcellular location is the myofibril. It localises to the sarcomere. The protein localises to the z line. It is found in the cytoskeleton. The protein resides in the microtubule organizing center. Its subcellular location is the perinuclear region. Component of the LINC (LInker of Nucleoskeleton and Cytoskeleton) complex involved in the connection between the nuclear lamina and the cytoskeleton. Collaborates with Klar to promote even spacing of the myonuclei at the periphery of striated muscle fibers by mediating a tight association between a nuclear ring structure of Msp300 and the plus ends of a unique astral MT network. In addition, is essential for anchoring nuclei, mitochondria and endoplasmic reticulum (ER) structures to the Z-disks. In fat body cells, part of perinuclear non-centrosomal microtubule-organizing centers (ncMTOCs) which function to accommodate the organization of microtubule (MT) networks to control nuclear positioning and dynein motor-based retrograde endosomal trafficking. Functions as the primary organizer of the ncMTOC by recruiting Patronin, shot and msps to the organizing centre. Within the ncMTOC, Msp300 and shot anchors the ncMTOC at the nuclear surface and recruits the MT minus-end regulators Patronin and Nin for assembly, anchoring and/or stabilization of circumferential and radial MTs at the ncMTOCs. Patronin, and perhaps Nin, recruits msps to the ncMTOC for the gamma-tubulin-independent elongation of radial MTs. This chain is Muscle-specific protein 300 kDa, found in Drosophila melanogaster (Fruit fly).